Here is a 123-residue protein sequence, read N- to C-terminus: Fluoride-specific ion channel FluC (123 aa).

Transmembrane regions (helical) follow at residues 5 to 25 (VWVA…YKFV), 33 to 53 (LATF…IGAF), 62 to 82 (LKLA…TFAA), and 94 to 114 (ITAF…VALG). Na(+) contacts are provided by Gly72 and Ser75.

This sequence belongs to the fluoride channel Fluc/FEX (TC 1.A.43) family.

It is found in the cell inner membrane. The catalysed reaction is fluoride(in) = fluoride(out). Na(+) is not transported, but it plays an essential structural role and its presence is essential for fluoride channel function. Its function is as follows. Fluoride-specific ion channel. Important for reducing fluoride concentration in the cell, thus reducing its toxicity. The sequence is that of Fluoride-specific ion channel FluC from Ignicoccus hospitalis (strain KIN4/I / DSM 18386 / JCM 14125).